A 278-amino-acid polypeptide reads, in one-letter code: Phosphatidylglycerol--prolipoprotein diacylglyceryl transferase (278 aa).

The next 3 helical transmembrane spans lie at 21-41 (WYGI…QASV), 54-74 (IIFW…VIFQ), and 88-108 (IWQG…TGII). Arg-136 contacts a 1,2-diacyl-sn-glycero-3-phospho-(1'-sn-glycerol). Transmembrane regions (helical) follow at residues 176 to 196 (QPTF…LILL), 202 to 222 (IGDT…FVEG), and 234 to 254 (IRIA…IMIV).

Belongs to the Lgt family.

It is found in the cell membrane. The enzyme catalyses L-cysteinyl-[prolipoprotein] + a 1,2-diacyl-sn-glycero-3-phospho-(1'-sn-glycerol) = an S-1,2-diacyl-sn-glyceryl-L-cysteinyl-[prolipoprotein] + sn-glycerol 1-phosphate + H(+). The protein operates within protein modification; lipoprotein biosynthesis (diacylglyceryl transfer). Its function is as follows. Catalyzes the transfer of the diacylglyceryl group from phosphatidylglycerol to the sulfhydryl group of the N-terminal cysteine of a prolipoprotein, the first step in the formation of mature lipoproteins. This Staphylococcus saprophyticus subsp. saprophyticus (strain ATCC 15305 / DSM 20229 / NCIMB 8711 / NCTC 7292 / S-41) protein is Phosphatidylglycerol--prolipoprotein diacylglyceryl transferase.